Here is a 360-residue protein sequence, read N- to C-terminus: Protein Wnt-2 (360 aa).

An N-terminal signal peptide occupies residues 1 to 25; that stretch reads MNSPLRGIWLWLPLLLTWLTPEVSS. 11 cysteine pairs are disulfide-bonded: C76–C87, C127–C135, C137–C157, C206–C220, C208–C215, C278–C309, C294–C304, C308–C348, C324–C339, C326–C336, and C331–C332. A lipid anchor (O-palmitoleoyl serine; by PORCN) is attached at S212. N295 carries N-linked (GlcNAc...) asparagine glycosylation.

Belongs to the Wnt family. Palmitoleoylation is required for efficient binding to frizzled receptors. Depalmitoleoylation leads to Wnt signaling pathway inhibition.

The protein resides in the secreted. It is found in the extracellular space. It localises to the extracellular matrix. Ligand for members of the frizzled family of seven transmembrane receptors. Functions in the canonical Wnt signaling pathway that results in activation of transcription factors of the TCF/LEF family. Functions as a upstream regulator of FGF10 expression. Plays an important role in embryonic lung development. May contribute to embryonic brain development by regulating the proliferation of dopaminergic precursors and neurons. In Callithrix jacchus (White-tufted-ear marmoset), this protein is Protein Wnt-2 (WNT2).